A 495-amino-acid chain; its full sequence is Serine/threonine-protein kinase F (495 aa).

The 269-residue stretch at 46–314 folds into the Protein kinase domain; that stretch reads YLPVKLLGQG…ASAEEVLAVL (269 aa). ATP is bound by residues 52–60 and Lys77; that span reads LGQGGFGAA. Asp187 serves as the catalytic Proton acceptor. The tract at residues 316–354 is disordered; the sequence is GGKGNQGKAPPGATVSTPQGTNTQIQPTPASSASPLTAP. Positions 329–350 are enriched in polar residues; that stretch reads TVSTPQGTNTQIQPTPASSASP.

Belongs to the protein kinase superfamily. Ser/Thr protein kinase family.

It catalyses the reaction L-seryl-[protein] + ATP = O-phospho-L-seryl-[protein] + ADP + H(+). The enzyme catalyses L-threonyl-[protein] + ATP = O-phospho-L-threonyl-[protein] + ADP + H(+). The polypeptide is Serine/threonine-protein kinase F (spkF) (Synechocystis sp. (strain ATCC 27184 / PCC 6803 / Kazusa)).